The chain runs to 349 residues: Anaerobic nitrite reductase Glb1-3 (349 aa).

2 consecutive Globin domains span residues 13-162 (GFTE…AEMK) and 184-333 (CFTE…AEMK). Residues S56, K70, H74, K104, T108, H109, S227, K241, H245, K275, T279, and H280 each contribute to the heme b site.

The protein belongs to the plant globin family. In terms of assembly, monomer. Requires heme b as cofactor.

It is found in the cytoplasm. It localises to the nucleus. The catalysed reaction is Fe(III)-heme b-[protein] + nitric oxide + H2O = Fe(II)-heme b-[protein] + nitrite + 2 H(+). Its function is as follows. Phytoglobin that regulates the fine tuning of nitric oxide (NO) concentration in the cytosol in response to sudden changes in O(2) availability, and performs both symbiotic and nonsymbiotic functions. Exhibits NO dioxygenase activity in the presence of O(2) but nitrite reductase (NiR) activity in the absence of O(2) (e.g. during flooding or in waterlogged soil). May not function as an oxygen storage or transport protein. Extremely reactive toward the physiological ligands O(2), nitric oxide (NO), and nitrite with a very high affinity for O(2) through an hexacoordinate heme iron because of a very low dissociation constant. The sequence is that of Anaerobic nitrite reductase Glb1-3 from Medicago truncatula (Barrel medic).